Here is a 78-residue protein sequence, read N- to C-terminus: RNA-binding protein Hfq (78 aa).

In terms of domain architecture, Sm spans 10 to 69 (DPFLNALRKEHVPVSIYLVNGIKLQGNIESFDQYVVLLRNTVTQMVYKHAISTVVPARPV).

This sequence belongs to the Hfq family. Homohexamer.

RNA chaperone that binds small regulatory RNA (sRNAs) and mRNAs to facilitate mRNA translational regulation in response to envelope stress, environmental stress and changes in metabolite concentrations. Also binds with high specificity to tRNAs. This is RNA-binding protein Hfq from Paraburkholderia phymatum (strain DSM 17167 / CIP 108236 / LMG 21445 / STM815) (Burkholderia phymatum).